Consider the following 189-residue polypeptide: Large ribosomal subunit protein bL9 (189 aa).

It belongs to the bacterial ribosomal protein bL9 family.

In terms of biological role, binds to the 23S rRNA. The protein is Large ribosomal subunit protein bL9 of Brucella canis (strain ATCC 23365 / NCTC 10854 / RM-666).